The primary structure comprises 135 residues: BolA-like protein 1 (135 aa).

Ser81 bears the Phosphoserine mark. The tract at residues 114-135 (WKENPQLDTSPACLGGSKKSRN) is disordered.

The protein belongs to the BolA/IbaG family. As to quaternary structure, interacts with GLRX5.

The protein localises to the mitochondrion. Functionally, acts as a mitochondrial iron-sulfur (Fe-S) cluster assembly factor that facilitates (Fe-S) cluster insertion into a subset of mitochondrial proteins. Probably acts together with the monothiol glutaredoxin GLRX5. May protect cells against oxidative stress. This Bos taurus (Bovine) protein is BolA-like protein 1 (BOLA1).